Reading from the N-terminus, the 315-residue chain is Glycine--tRNA ligase alpha subunit (315 aa).

Belongs to the class-II aminoacyl-tRNA synthetase family. Tetramer of two alpha and two beta subunits.

The protein resides in the cytoplasm. It carries out the reaction tRNA(Gly) + glycine + ATP = glycyl-tRNA(Gly) + AMP + diphosphate. The sequence is that of Glycine--tRNA ligase alpha subunit from Pseudomonas putida (strain GB-1).